The following is a 131-amino-acid chain: uncharacterized protein (131 aa).

A coiled-coil region spans residues 4–44 (QKPEQDVNKKIEELEKKVQELQEQLEKTKQAVKTVASILDN).

This is an uncharacterized protein from Sulfolobus islandicus filamentous virus (isolate Iceland/Hveragerdi) (SIFV).